Reading from the N-terminus, the 224-residue chain is Cytochrome c biogenesis ATP-binding export protein CcmA (224 aa).

The region spanning 1–220 is the ABC transporter domain; it reads MQNAEAAPAL…EYAHAEVVGA (220 aa). 40 to 47 lines the ATP pocket; the sequence is GANGSGKT.

It belongs to the ABC transporter superfamily. CcmA exporter (TC 3.A.1.107) family. As to quaternary structure, the complex is composed of two ATP-binding proteins (CcmA) and two transmembrane proteins (CcmB).

The protein resides in the cell inner membrane. The enzyme catalyses heme b(in) + ATP + H2O = heme b(out) + ADP + phosphate + H(+). Functionally, part of the ABC transporter complex CcmAB involved in the biogenesis of c-type cytochromes; once thought to export heme, this seems not to be the case, but its exact role is uncertain. Responsible for energy coupling to the transport system. The chain is Cytochrome c biogenesis ATP-binding export protein CcmA from Bordetella bronchiseptica (strain ATCC BAA-588 / NCTC 13252 / RB50) (Alcaligenes bronchisepticus).